A 744-amino-acid polypeptide reads, in one-letter code: Cytoskeleton-associated protein 2-like (744 aa).

Disordered regions lie at residues Tyr-35 to Lys-56, Leu-76 to Glu-169, Lys-182 to Ala-216, Thr-317 to Gly-337, and Asn-428 to Thr-452. Composition is skewed to polar residues over residues Leu-76–Ser-86, Ser-102–Gly-129, and Gly-137–Gln-154. Residue Lys-195 forms a Glycyl lysine isopeptide (Lys-Gly) (interchain with G-Cter in SUMO1); alternate linkage. Lys-195 is covalently cross-linked (Glycyl lysine isopeptide (Lys-Gly) (interchain with G-Cter in SUMO2); alternate). Over residues Glu-199–Ala-216 the composition is skewed to polar residues. Ser-744 is modified (phosphoserine).

This sequence belongs to the CKAP2 family. Ubiquitinated by the anaphase promoting complex/cyclosome (APC/C).

The protein resides in the cytoplasm. It localises to the cytoskeleton. Its subcellular location is the spindle pole. Microtubule-associated protein required for mitotic spindle formation and cell-cycle progression in neural progenitor cells. In Bos taurus (Bovine), this protein is Cytoskeleton-associated protein 2-like (CKAP2L).